A 2615-amino-acid chain; its full sequence is Polycystin-1-like protein 1 (2615 aa).

The Extracellular portion of the chain corresponds to 1–1524 (MDVDEDQHAV…VSSISEFQSH (1524 aa)). Positions 17–93 (IQANPELCVS…GTNSFSNPPP (77 aa)) are disordered. Asparagine 224, asparagine 297, asparagine 306, asparagine 390, asparagine 440, asparagine 534, and asparagine 619 each carry an N-linked (GlcNAc...) asparagine glycan. PKD domains are found at residues 291–373 (SVSV…VQKR) and 375–456 (MANR…VREP). Positions 457–1349 (CQPPPVKNMG…GEEDYLHKRN (893 aa)) constitute an REJ domain. The interval 749–815 (SSKSDLPSNL…GEPMEEYSSL (67 aa)) is disordered. A compositionally biased stretch (polar residues) spans 778 to 789 (ALSNLGSISAES). Residues 1364–1512 (RFTGLSENSQ…SVLRRKLNAT (149 aa)) form the GAIN-B domain. N-linked (GlcNAc...) asparagine glycosylation occurs at asparagine 1458. A disulfide bond links cysteine 1468 and cysteine 1494. The interval 1468 to 1512 (CVFWDKTEWRSEGPYPQPGSSPEKVNCSYHHLAPVSVLRRKLNAT) is GPS. Asparagine 1510 carries N-linked (GlcNAc...) asparagine glycosylation. The helical transmembrane segment at 1525–1545 (PHNLLPGIFSAFLLVLYGILV) threads the bilayer. Over 1546-1732 (SKSRYVDCHE…PPSRSYLHTQ (187 aa)) the chain is Cytoplasmic. The 118-residue stretch at 1573–1690 (QLYAVVIDTG…LGGHVLREFF (118 aa)) folds into the PLAT domain. The chain crosses the membrane as a helical span at residues 1733 to 1753 (RLAVSFCLLCVYSCLTALVTV). Over 1754-1772 (RDHQQRPLDVGPTAITLEP) the chain is Extracellular. The helical transmembrane segment at 1773 to 1793 (FCMALLCTLLACPVAQLLSLL) threads the bilayer. The Cytoplasmic segment spans residues 1794-1905 (FRCSKEARGD…ELGSQKSRVC (112 aa)). Residues 1807–1840 (STQWPLRGVKTETPQGHDSSGRPDSRQPSPHPTS) are disordered. A helical membrane pass occupies residues 1906–1926 (LLWSSSVAWAISGSASLACGL). At 1927 to 1950 (GTGFLGYWFVPAQCMWWLYLLLLS) the chain is on the extracellular side. A helical transmembrane segment spans residues 1951 to 1971 (LVCCAFITQPLMICLAALVFA). Residues 1972–2057 (WKRKHDSKFF…ERLRRESIMQ (86 aa)) lie on the Cytoplasmic side of the membrane. Residues 2058–2078 (AALRDMTTHSIMLLLLLFIAY) traverse the membrane as a helical segment. Over 2079-2288 (GRFCPGEISL…IFYSDSALKY (210 aa)) the chain is Extracellular. The chain crosses the membrane as a helical span at residues 2289-2309 (LLMLSELLFLVLNVIHLCFQL). Residues 2310 to 2332 (WGMTTKGILSYWRKPRHWLELSM) lie on the Cytoplasmic side of the membrane. Residues 2333-2353 (VGVAIAYYAASGHLTTLAVNI) form a helical membrane-spanning segment. Residues 2354–2379 (TDQFHKGLYQRLVDIGLMVSWHQRAR) lie on the Extracellular side of the membrane. The helical transmembrane segment at 2380 to 2400 (CLQGILLFLWMLKYVHLLSSL) threads the bilayer. Residues 2401-2405 (STMTP) are Cytoplasmic-facing. A helical membrane pass occupies residues 2406–2426 (FSAVTCFPLFRVLLVGALLLA). The Extracellular segment spans residues 2427–2483 (AHYHSRWFLLFTGTLSHGTSAEAFPGLLLQFPGRSKKDSWHNCLKSDHGVMRCYYGT). The helical transmembrane segment at 2484–2504 (LFLLLATLGFRMLRATFLTVF) threads the bilayer. The Cytoplasmic portion of the chain corresponds to 2505–2615 (QNRKSSHRKP…VSGPLAAESE (111 aa)). The tract at residues 2589 to 2615 (RAGDSPPVGSSEYQATGVSGPLAAESE) is disordered.

It belongs to the polycystin family. As to quaternary structure, heterodimer. Interacts with PKD2 to form a calcium channel. Interacts with PKD2L1; to form ciliary calcium channel. May interact with GNA12, GNAS, GNAI1 and GNAI2. In terms of tissue distribution, in testis, strong expression in Leydig cells, low level in seminal ducts, myoid cells and tunica vaginalis. Other tissues, including adrenal gland and heart myocardium, also show low expression. In embryo, highly expressed in the node.

The protein resides in the cell projection. Its subcellular location is the cilium membrane. Its function is as follows. Component of a calcium-permeant ion channel formed by PKD1L2 and PKD1L1 in primary cilia, where it controls cilium calcium concentration, without affecting cytoplasmic calcium concentration, and regulates sonic hedgehog/SHH signaling and GLI2 transcription. The PKD1L1:PKD2L1 channel complex is mechanosensitive only at high pressures and is highly temperature sensitive. Also involved in left/right axis specification downstream of nodal flow by forming a complex with PKD2 in cilia to facilitate flow detection in left/right patterning. May function as a G-protein-coupled receptor. The chain is Polycystin-1-like protein 1 from Mus musculus (Mouse).